The sequence spans 385 residues: Lipid-A-disaccharide synthase (385 aa).

It belongs to the LpxB family.

The catalysed reaction is a lipid X + a UDP-2-N,3-O-bis[(3R)-3-hydroxyacyl]-alpha-D-glucosamine = a lipid A disaccharide + UDP + H(+). Its pathway is bacterial outer membrane biogenesis; LPS lipid A biosynthesis. Condensation of UDP-2,3-diacylglucosamine and 2,3-diacylglucosamine-1-phosphate to form lipid A disaccharide, a precursor of lipid A, a phosphorylated glycolipid that anchors the lipopolysaccharide to the outer membrane of the cell. The sequence is that of Lipid-A-disaccharide synthase from Rickettsia canadensis (strain McKiel).